The sequence spans 343 residues: Flavonoid 4'-O-methyltransferase 4 (343 aa).

Residue D211 coordinates S-adenosyl-L-methionine. H249 serves as the catalytic Proton acceptor.

It belongs to the class I-like SAM-binding methyltransferase superfamily. Cation-independent O-methyltransferase family. Homodimer.

It carries out the reaction apigenin + S-adenosyl-L-methionine = acacetin + S-adenosyl-L-homocysteine + H(+). The catalysed reaction is kaempferol + S-adenosyl-L-methionine = kaempferide + S-adenosyl-L-homocysteine + H(+). It catalyses the reaction isorhamnetin + S-adenosyl-L-methionine = 3',4'-O-dimethylquercetin + S-adenosyl-L-homocysteine + 2 H(+). The enzyme catalyses scutellarein + S-adenosyl-L-methionine = scutellarein 4'-methyl ether + S-adenosyl-L-homocysteine + H(+). It carries out the reaction (2S)-naringenin + S-adenosyl-L-methionine = (2S)-naringenin 4'-methyl ether + S-adenosyl-L-homocysteine + H(+). The catalysed reaction is 4',7,8-trihydroxyflavone + S-adenosyl-L-methionine = 7,8-dihydroxy-4'-methoxyflavone + S-adenosyl-L-homocysteine + H(+). It catalyses the reaction taxifolin + S-adenosyl-L-methionine = taxifolin 4'-methyl ether + S-adenosyl-L-homocysteine + H(+). Its pathway is flavonoid metabolism. In terms of biological role, flavonoid 4'-O-methyltransferase involved in the biosynthesis of polymethoxylated flavonoids natural products such as pebrellin, aroma compounds which contribute to the flavor of peppermint, and exhibit pharmacological activities such as anti-allergic, anti-oxidant, antibacterial, anti-proliferative, and anti-inflammatory effects. Catalyzes S-adenosylmethionine-dependent regioselective 4'-O-methylation of flavonoids; active on various hydroxylated flavonoid substrates, including isorhamnetin, kaempferol, apigenin (API), scutellarein (6-hydroxy-apigenin, 6-OH-API, SCU), taxifolin, 7,8,4'-trihydroxy-flavone and naringenin (NAR), and, with a lower efficiency, quercetin, rhamnetin, luteolin (LUT) and 7,8,3',4'-tetrahydroxy-flavone. The sequence is that of Flavonoid 4'-O-methyltransferase 4 from Mentha piperita (Peppermint).